The sequence spans 646 residues: Interferon-induced GTP-binding protein MxA (646 aa).

Residues 34-307 form the Dynamin-type G domain; that stretch reads DLALPAIAVI…LVHHIQKSLP (274 aa). A G1 motif region spans residues 44–51; it reads GDQSSGKS. GTP is bound at residue 44 to 51; sequence GDQSSGKS. The G2 motif stretch occupies residues 69-71; sequence VTR. Residues 145–148 are G3 motif; the sequence is DLPG. GTP-binding positions include 145-149 and 214-217; these read DLPGI and TKPD. The interval 214–217 is G4 motif; the sequence is TKPD. A G5 motif region spans residues 246-249; sequence RCRG. The region spanning 546-637 is the GED domain; the sequence is LREMRLHLKS…PLGHLLEVTF (92 aa).

The protein belongs to the TRAFAC class dynamin-like GTPase superfamily. Dynamin/Fzo/YdjA family.

The protein resides in the cytoplasm. This Danio rerio (Zebrafish) protein is Interferon-induced GTP-binding protein MxA (mxa).